A 695-amino-acid chain; its full sequence is Probable pre-mRNA-splicing factor ATP-dependent RNA helicase DEAH9 (695 aa).

Residues 58 to 223 (LYLVENHATT…FNSSKKRHAP (166 aa)) enclose the Helicase ATP-binding domain. 71–78 (GETGSGKT) is an ATP binding site. The short motif at 170-173 (DEAH) is the DEAH box element. A Helicase C-terminal domain is found at 261-438 (SVVSTILLIN…STVIQLKALG (178 aa)).

This sequence belongs to the DEAD box helicase family. DEAH subfamily. DDX35 sub-subfamily.

It carries out the reaction ATP + H2O = ADP + phosphate + H(+). May be involved in pre-mRNA splicing. In Arabidopsis thaliana (Mouse-ear cress), this protein is Probable pre-mRNA-splicing factor ATP-dependent RNA helicase DEAH9.